We begin with the raw amino-acid sequence, 304 residues long: Mycothiol acetyltransferase (304 aa).

2 N-acetyltransferase domains span residues 16-155 (AHVE…RTGL) and 164-304 (VALS…YRRA). Glu-46 is a 1D-myo-inositol 2-(L-cysteinylamino)-2-deoxy-alpha-D-glucopyranoside binding site. An acetyl-CoA-binding site is contributed by 87 to 89 (LVV). 1D-myo-inositol 2-(L-cysteinylamino)-2-deoxy-alpha-D-glucopyranoside is bound by residues Glu-190, Lys-230, and Glu-237. Acetyl-CoA-binding positions include 241-243 (LGV) and 248-254 (AARGLGS). Tyr-275 lines the 1D-myo-inositol 2-(L-cysteinylamino)-2-deoxy-alpha-D-glucopyranoside pocket.

This sequence belongs to the acetyltransferase family. MshD subfamily. In terms of assembly, monomer.

It carries out the reaction 1D-myo-inositol 2-(L-cysteinylamino)-2-deoxy-alpha-D-glucopyranoside + acetyl-CoA = mycothiol + CoA + H(+). Functionally, catalyzes the transfer of acetyl from acetyl-CoA to desacetylmycothiol (Cys-GlcN-Ins) to form mycothiol. In Clavibacter sepedonicus (Clavibacter michiganensis subsp. sepedonicus), this protein is Mycothiol acetyltransferase.